Consider the following 190-residue polypeptide: Large ribosomal subunit protein uL5 (190 aa).

The protein belongs to the universal ribosomal protein uL5 family. Part of the 50S ribosomal subunit; part of the 5S rRNA/L5/L18/L25 subcomplex. Contacts the 5S rRNA and the P site tRNA. Forms a bridge to the 30S subunit in the 70S ribosome.

This is one of the proteins that bind and probably mediate the attachment of the 5S RNA into the large ribosomal subunit, where it forms part of the central protuberance. In the 70S ribosome it contacts protein S13 of the 30S subunit (bridge B1b), connecting the 2 subunits; this bridge is implicated in subunit movement. Contacts the P site tRNA; the 5S rRNA and some of its associated proteins might help stabilize positioning of ribosome-bound tRNAs. The polypeptide is Large ribosomal subunit protein uL5 (Blochmanniella floridana).